The chain runs to 238 residues: Ribonuclease PH (238 aa).

Phosphate is bound by residues Arg-86 and 124 to 126; that span reads GTR.

This sequence belongs to the RNase PH family. In terms of assembly, homohexameric ring arranged as a trimer of dimers.

It catalyses the reaction tRNA(n+1) + phosphate = tRNA(n) + a ribonucleoside 5'-diphosphate. Its function is as follows. Phosphorolytic 3'-5' exoribonuclease that plays an important role in tRNA 3'-end maturation. Removes nucleotide residues following the 3'-CCA terminus of tRNAs; can also add nucleotides to the ends of RNA molecules by using nucleoside diphosphates as substrates, but this may not be physiologically important. Probably plays a role in initiation of 16S rRNA degradation (leading to ribosome degradation) during starvation. In Acinetobacter baylyi (strain ATCC 33305 / BD413 / ADP1), this protein is Ribonuclease PH.